The chain runs to 329 residues: Thiamine thiazole synthase (329 aa).

Residues Cys86, 107-108 (EA), Gly115, and Val180 contribute to the substrate site. Position 218 is a 2,3-didehydroalanine (Cys) (Cys218). Substrate is bound by residues Asp220, His235, Met287, and 297 to 299 (RMG).

Belongs to the THI4 family. In terms of assembly, homooctamer. Requires Fe cation as cofactor. During the catalytic reaction, a sulfide is transferred from Cys-218 to a reaction intermediate, generating a dehydroalanine residue.

The protein localises to the cytoplasm. Its subcellular location is the nucleus. The catalysed reaction is [ADP-thiazole synthase]-L-cysteine + glycine + NAD(+) = [ADP-thiazole synthase]-dehydroalanine + ADP-5-ethyl-4-methylthiazole-2-carboxylate + nicotinamide + 3 H2O + 2 H(+). In terms of biological role, involved in biosynthesis of the thiamine precursor thiazole. Catalyzes the conversion of NAD and glycine to adenosine diphosphate 5-(2-hydroxyethyl)-4-methylthiazole-2-carboxylic acid (ADT), an adenylated thiazole intermediate. The reaction includes an iron-dependent sulfide transfer from a conserved cysteine residue of the protein to a thiazole intermediate. The enzyme can only undergo a single turnover, which suggests it is a suicide enzyme. May have additional roles in adaptation to various stress conditions and in DNA damage tolerance. This Phaeosphaeria nodorum (strain SN15 / ATCC MYA-4574 / FGSC 10173) (Glume blotch fungus) protein is Thiamine thiazole synthase.